Here is a 231-residue protein sequence, read N- to C-terminus: Regulatory factor X-associated protein (231 aa).

A disordered region spans residues 1–163; sequence MEAQAVPEGS…GNVKLEESTD (163 aa). Over residues 50-65 the composition is skewed to acidic residues; it reads ADAEDEAGDDDADLLD. Positions 115 to 138 are enriched in basic residues; the sequence is KQRKPWMCKKHRNKMYKDKYKKKK. A Nuclear localization signal motif is present at residues 123 to 138; it reads KKHRNKMYKDKYKKKK. K157 is covalently cross-linked (Glycyl lysine isopeptide (Lys-Gly) (interchain with G-Cter in SUMO2)).

RFX consists of at least 3 different subunits; RFXAP, RFX5 and RFX-B/RFXANK; with each subunit representing a separate complementation group. RFX forms cooperative DNA binding complexes with X2BP and CBF/NF-Y. RFX associates with CIITA to form an active transcriptional complex. Phosphorylated.

Its subcellular location is the nucleus. Functionally, part of the RFX complex that binds to the X-box of MHC II promoters. The polypeptide is Regulatory factor X-associated protein (Rfxap) (Mus musculus (Mouse)).